The primary structure comprises 229 residues: Large ribosomal subunit protein uL1 (229 aa).

This sequence belongs to the universal ribosomal protein uL1 family. As to quaternary structure, part of the 50S ribosomal subunit.

Functionally, binds directly to 23S rRNA. The L1 stalk is quite mobile in the ribosome, and is involved in E site tRNA release. Protein L1 is also a translational repressor protein, it controls the translation of the L11 operon by binding to its mRNA. The chain is Large ribosomal subunit protein uL1 from Haemophilus influenzae (strain 86-028NP).